The sequence spans 342 residues: Oxygen-dependent coproporphyrinogen-III oxidase (342 aa).

Ser98 contributes to the substrate binding site. His102 and His112 together coordinate a divalent metal cation. The Proton donor role is filled by His112. 114–116 provides a ligand contact to substrate; that stretch reads NYR. The a divalent metal cation site is built by His146 and His176. The segment at 266–301 is important for dimerization; sequence YVEFNLVWDRGTIFGLQTNGRTESILMSLPPLARWE.

It belongs to the aerobic coproporphyrinogen-III oxidase family. As to quaternary structure, homodimer. A divalent metal cation serves as cofactor.

It is found in the cytoplasm. The catalysed reaction is coproporphyrinogen III + O2 + 2 H(+) = protoporphyrinogen IX + 2 CO2 + 2 H2O. It functions in the pathway porphyrin-containing compound metabolism; protoporphyrin-IX biosynthesis; protoporphyrinogen-IX from coproporphyrinogen-III (O2 route): step 1/1. Its function is as follows. Involved in the heme and chlorophyll biosynthesis. Catalyzes the aerobic oxidative decarboxylation of propionate groups of rings A and B of coproporphyrinogen-III to yield the vinyl groups in protoporphyrinogen-IX. The chain is Oxygen-dependent coproporphyrinogen-III oxidase from Prochlorococcus marinus (strain MIT 9301).